The primary structure comprises 459 residues: Trigger factor (459 aa).

A PPIase FKBP-type domain is found at 161–246; it reads GDKVVIDFQG…IKKIMEGKLP (86 aa).

It belongs to the FKBP-type PPIase family. Tig subfamily.

The protein localises to the cytoplasm. It catalyses the reaction [protein]-peptidylproline (omega=180) = [protein]-peptidylproline (omega=0). In terms of biological role, involved in protein export. Acts as a chaperone by maintaining the newly synthesized protein in an open conformation. Functions as a peptidyl-prolyl cis-trans isomerase. The protein is Trigger factor of Legionella pneumophila (strain Corby).